The following is a 498-amino-acid chain: ATP synthase subunit beta, chloroplastic (498 aa).

ATP is bound at residue 172–179 (GGAGVGKT).

Belongs to the ATPase alpha/beta chains family. F-type ATPases have 2 components, CF(1) - the catalytic core - and CF(0) - the membrane proton channel. CF(1) has five subunits: alpha(3), beta(3), gamma(1), delta(1), epsilon(1). CF(0) has four main subunits: a(1), b(1), b'(1) and c(9-12).

The protein resides in the plastid. It is found in the chloroplast thylakoid membrane. The catalysed reaction is ATP + H2O + 4 H(+)(in) = ADP + phosphate + 5 H(+)(out). Its function is as follows. Produces ATP from ADP in the presence of a proton gradient across the membrane. The catalytic sites are hosted primarily by the beta subunits. This Nicotiana sylvestris (Wood tobacco) protein is ATP synthase subunit beta, chloroplastic.